The sequence spans 134 residues: Small ribosomal subunit protein uS8 (134 aa).

This sequence belongs to the universal ribosomal protein uS8 family. In terms of assembly, part of the 30S ribosomal subunit. Contacts proteins S5 and S12.

In terms of biological role, one of the primary rRNA binding proteins, it binds directly to 16S rRNA central domain where it helps coordinate assembly of the platform of the 30S subunit. This is Small ribosomal subunit protein uS8 from Kosmotoga olearia (strain ATCC BAA-1733 / DSM 21960 / TBF 19.5.1).